Consider the following 103-residue polypeptide: Flagellar hook-basal body complex protein FliE (103 aa).

This sequence belongs to the FliE family.

The protein resides in the bacterial flagellum basal body. The chain is Flagellar hook-basal body complex protein FliE from Helicobacter hepaticus (strain ATCC 51449 / 3B1).